The primary structure comprises 403 residues: Alkaline protease 1 (403 aa).

The N-terminal stretch at 1 to 21 (MQSIKRTLLLLGAVLPAVLAG) is a signal peptide. A propeptide spanning residues 22–121 (PIFPHRRAPT…VEEDQVWHLF (100 aa)) is cleaved from the precursor. In terms of domain architecture, Inhibitor I9 spans 36–120 (KYIVTFKSDV…AVEEDQVWHL (85 aa)). In terms of domain architecture, Peptidase S8 spans 130-403 (PWGLGSISHK…PNLLAYNGNA (274 aa)). Residues Asp162 and His193 each act as charge relay system in the active site. Residues Asn253 and Asn309 are each glycosylated (N-linked (GlcNAc...) asparagine). The active-site Charge relay system is Ser349.

Belongs to the peptidase S8 family.

It is found in the secreted. It carries out the reaction Hydrolysis of proteins with broad specificity, and of Bz-Arg-OEt &gt; Ac-Tyr-OEt. Does not hydrolyze peptide amides.. Secreted alkaline protease that allows assimilation of proteinaceous substrates. This is Alkaline protease 1 (alp1) from Aspergillus flavus.